Here is a 734-residue protein sequence, read N- to C-terminus: Photosystem I P700 chlorophyll a apoprotein A2 (734 aa).

8 helical membrane passes run I46–A69, L135–E158, L175–I199, I273–Y291, L330–Y353, A369–T395, A417–H439, and F517–S535. The [4Fe-4S] cluster site is built by C559 and C568. A run of 2 helical transmembrane segments spans residues A575–W596 and L643–I665. Residues H654, M662, and Y670 each coordinate chlorophyll a. W671 is a binding site for phylloquinone. Residues L707–P727 form a helical membrane-spanning segment.

It belongs to the PsaA/PsaB family. In terms of assembly, the PsaA/B heterodimer binds the P700 chlorophyll special pair and subsequent electron acceptors. PSI consists of a core antenna complex that captures photons, and an electron transfer chain that converts photonic excitation into a charge separation. The eukaryotic PSI reaction center is composed of at least 11 subunits. P700 is a chlorophyll a/chlorophyll a' dimer, A0 is one or more chlorophyll a, A1 is one or both phylloquinones and FX is a shared 4Fe-4S iron-sulfur center. serves as cofactor.

Its subcellular location is the plastid. It localises to the chloroplast thylakoid membrane. It carries out the reaction reduced [plastocyanin] + hnu + oxidized [2Fe-2S]-[ferredoxin] = oxidized [plastocyanin] + reduced [2Fe-2S]-[ferredoxin]. PsaA and PsaB bind P700, the primary electron donor of photosystem I (PSI), as well as the electron acceptors A0, A1 and FX. PSI is a plastocyanin-ferredoxin oxidoreductase, converting photonic excitation into a charge separation, which transfers an electron from the donor P700 chlorophyll pair to the spectroscopically characterized acceptors A0, A1, FX, FA and FB in turn. Oxidized P700 is reduced on the lumenal side of the thylakoid membrane by plastocyanin. In Selaginella uncinata (Blue spike-moss), this protein is Photosystem I P700 chlorophyll a apoprotein A2.